Here is a 713-residue protein sequence, read N- to C-terminus: MKTEISTADSLRDPPSNGLKADSELVIREDIDQFLPSEVSSLGSDHQNDGEDSDTDSDNFLQDPEDDVDEESTGRGTVTTTSTSTESRGRPSSCIFVASLAAALSDDELCLSVTENFKKYGDLARVKVLRDNANRPYAFVQYNNDHDAKHALIRAQGTLLNGRRLRCEPAKVNRTLYLKNQQSIDFNEISQICEKFGGLEQIVPDRTDNQYTRRYTYPISSANSWFVQFVYRDDAIRAYANLRTDPNWIIEWAQNINVPKNYNLLHKSKFKSSKYHQNNGIINNDGSNNNDNNNSNNNNREDSRRNGDVIEEECGHVHGSDSEEKLTSDGIYDDEDKDSEITIDKRSIFVGQLDKETTREELNRRFSTHGKIQDINLIFKPTNIFAFIKYETEEAAAAALESENHAIFLNKTMHVQYKEVGGRHNRKFSGKNGGSNFNHHQFFSTRSGKTFTGPELNLAPPPINMYRKMSGGSQQESETMMPYMPMGPMPMGPPPPNAASLSDFDMFPPSYSTFMKGMMPLRRKSMPNSWSSPSSKSVNSENESVNGGDENSELPSEIPESSGRYNAANSFTTYNNSSAGNSNNNNNNNNSNSNKSQYKKRYARRSSYGYNEVPPKPYYFQPYYYHPMQYHMGPMGPLHPSQGSAGNHHPYMMVYPMSPPPPSGLDGSMIPPPINVSQSHAANHGSTHVHANEFISNDTGDINEDNKAYSLDY.

Positions 1–90 are disordered; sequence MKTEISTADS…TSTSTESRGR (90 aa). The segment covering 21-31 has biased composition (basic and acidic residues); sequence ADSELVIREDI. Residues 50-71 show a composition bias toward acidic residues; that stretch reads GEDSDTDSDNFLQDPEDDVDEE. The span at 74–90 shows a compositional bias: low complexity; it reads GRGTVTTTSTSTESRGR. Positions 93 to 172 constitute an RRM 1 domain; it reads SCIFVASLAA…RRLRCEPAKV (80 aa). Residues 276-337 form a disordered region; the sequence is HQNNGIINND…SDGIYDDEDK (62 aa). Low complexity predominate over residues 278–298; the sequence is NNGIINNDGSNNNDNNNSNNN. Residues 299–327 show a composition bias toward basic and acidic residues; that stretch reads NREDSRRNGDVIEEECGHVHGSDSEEKLT. The RRM 2 domain occupies 346–420; the sequence is RSIFVGQLDK…KTMHVQYKEV (75 aa). Positions 524 to 609 are disordered; the sequence is KSMPNSWSSP…KRYARRSSYG (86 aa). Ser-525 carries the post-translational modification Phosphoserine. Positions 526–546 are enriched in low complexity; sequence MPNSWSSPSSKSVNSENESVN. Residues 563-574 are compositionally biased toward polar residues; the sequence is GRYNAANSFTTY. The segment covering 575–594 has biased composition (low complexity); the sequence is NNSSAGNSNNNNNNNNSNSN.

Polyubiquitinated by RSP5.

Functionally, positive regulator of sporulation-specific genes and of sporulation. Required for premeiotic DNA synthesis and meiotic chromosomal segregation. May act in a nutritional signaling pathway. In Saccharomyces cerevisiae (strain ATCC 204508 / S288c) (Baker's yeast), this protein is Meiotic activator RIM4 (RIM4).